The following is a 64-amino-acid chain: Large ribosomal subunit protein bL33 (64 aa).

A compositionally biased stretch (basic and acidic residues) spans 16-25 (EARTSSEPRR). The disordered stretch occupies residues 16–39 (EARTSSEPRRSNGISRYTTEKNKR).

The protein belongs to the bacterial ribosomal protein bL33 family.

This Prochlorococcus marinus (strain MIT 9515) protein is Large ribosomal subunit protein bL33.